The following is an 843-amino-acid chain: Glycogen phosphorylase, brain form (843 aa).

Ala2 bears the N-acetylalanine mark. Residue Ser15 is modified to Phosphoserine; by PHK; in form phosphorylase A. AMP contacts are provided by Asp43, Tyr197, and Arg310. Phosphotyrosine is present on Tyr197. Tyr473 is subject to Phosphotyrosine. Pyridoxal 5'-phosphate is bound at residue Lys569. Residues 677 to 678 are pyridoxal 5'-phosphate; it reads TG. Residue Lys681 is modified to N6-(pyridoxal phosphate)lysine.

The protein belongs to the glycogen phosphorylase family. In terms of assembly, homodimer. Dimers associate into a tetramer to form the enzymatically active phosphorylase A. It depends on pyridoxal 5'-phosphate as a cofactor. In terms of processing, phosphorylation of Ser-15 converts phosphorylase B (unphosphorylated) to phosphorylase A.

It catalyses the reaction [(1-&gt;4)-alpha-D-glucosyl](n) + phosphate = [(1-&gt;4)-alpha-D-glucosyl](n-1) + alpha-D-glucose 1-phosphate. Its activity is regulated as follows. Activity of phosphorylase is controlled both by allosteric means (through the non-covalent binding of metabolites) and by covalent modification. Thus AMP allosterically activates, whereas ATP, ADP, and glucose-6-phosphate allosterically inhibit, phosphorylase B. Glycogen phosphorylase that regulates glycogen mobilization. Phosphorylase is an important allosteric enzyme in carbohydrate metabolism. Enzymes from different sources differ in their regulatory mechanisms and in their natural substrates. However, all known phosphorylases share catalytic and structural properties. The chain is Glycogen phosphorylase, brain form (PYGB) from Bos taurus (Bovine).